The following is a 416-amino-acid chain: Signal recognition particle receptor FtsY (416 aa).

The segment covering 1-10 (MFSFFRRKKK) has biased composition (basic residues). Residues 1 to 24 (MFSFFRRKKKQETPALEEAQVQET) form a disordered region. Residues 224–231 (GINGAGKT), 304–308 (DTAGR), and 368–371 (TKLD) each bind GTP.

This sequence belongs to the GTP-binding SRP family. FtsY subfamily. Part of the signal recognition particle protein translocation system, which is composed of SRP and FtsY. SRP is a ribonucleoprotein composed of Ffh and a 4.5S RNA molecule. Mg(2+) serves as cofactor.

The protein localises to the cell membrane. It is found in the cytoplasm. The catalysed reaction is GTP + H2O = GDP + phosphate + H(+). Its function is as follows. Involved in targeting and insertion of nascent membrane proteins into the cytoplasmic membrane. Acts as a receptor for the complex formed by the signal recognition particle (SRP) and the ribosome-nascent chain (RNC). Interaction with SRP-RNC leads to the transfer of the RNC complex to the Sec translocase for insertion into the membrane, the hydrolysis of GTP by both Ffh and FtsY, and the dissociation of the SRP-FtsY complex into the individual components. The sequence is that of Signal recognition particle receptor FtsY from Neisseria gonorrhoeae.